A 418-amino-acid polypeptide reads, in one-letter code: Tyrosine--tRNA ligase 1 (418 aa).

Residue Tyr-34 coordinates L-tyrosine. The 'HIGH' region signature appears at 39-48 (PTGDSMHIGH). Tyr-166 and Gln-170 together coordinate L-tyrosine. The short motif at 228 to 232 (KFGKT) is the 'KMSKS' region element. Lys-231 is a binding site for ATP. In terms of domain architecture, S4 RNA-binding spans 350 to 416 (KNIVDWLVDT…GKKNYFLAKV (67 aa)).

It belongs to the class-I aminoacyl-tRNA synthetase family. TyrS type 1 subfamily. In terms of assembly, homodimer.

The protein localises to the cytoplasm. It carries out the reaction tRNA(Tyr) + L-tyrosine + ATP = L-tyrosyl-tRNA(Tyr) + AMP + diphosphate + H(+). Functionally, catalyzes the attachment of tyrosine to tRNA(Tyr) in a two-step reaction: tyrosine is first activated by ATP to form Tyr-AMP and then transferred to the acceptor end of tRNA(Tyr). The protein is Tyrosine--tRNA ligase 1 of Enterococcus faecalis (strain ATCC 700802 / V583).